The sequence spans 614 residues: Vitamin B12 transporter BtuB (614 aa).

The N-terminal stretch at 1–20 is a signal peptide; it reads MIKKASLLTACSVTAFSAWA. The TonB box motif lies at 26-33; sequence DTLVVTAN. Residues 38–152 form the TBDR plug domain; the sequence is PRSTVLAPTT…IGGVVNIITT (115 aa). Residues Leu-83, Ser-85, Asn-92, and 110 to 111 contribute to the cyanocob(III)alamin site; that span reads VS. The TBDR beta-barrel domain maps to 155–614; that stretch reads HPGTEISAGW…EYTLXGSYTF (460 aa). Transmembrane regions (beta stranded) follow at residues 158-165, 169-178, and 184-195; these read TEISAGWG, YQNYDVSTQQ, and TRVTLLGDYAHT. Residues Asp-199, Gln-211, Asp-213, and Asp-215 each contribute to the Ca(2+) site. The next 2 membrane-spanning stretches (beta stranded) occupy residues 217 to 227 and 232 to 248; these read FLSKTLYGALE and DAWS…NRTN. Ca(2+) is bound by residues Tyr-249 and Asp-250. Ala-251 contributes to the cyanocob(III)alamin binding site. Asp-261 provides a ligand contact to Ca(2+). Transmembrane regions (beta stranded) follow at residues 263–277, 279–296, 309–325, 328–337, 353–369, 371–381, 385–400, 403–417, 434–443, 449–458, 473–490, 494–509, 517–529, and 535–550; these read RKLY…LRYN, ELIK…KDYN, TLDE…NNII, HGNIGAGVDW, YDQR…QQVG, FTFEGAGRSDD, FGRH…WEFI, YRFI…KAPN, KSKQWEGAFE, VNWRISGYRN, YYNE…TANF, PLTH…ARNA, RRAK…QLDW, and DWGI…YDKD. Residue Thr-309 participates in cyanocob(III)alamin binding. Arg-517 is a cyanocob(III)alamin binding site. Cyanocob(III)alamin is bound at residue Tyr-551. The next 3 beta stranded transmembrane spans lie at 558 to 572, 585 to 596, and 602 to 614; these read TVKM…LAVA, IANLFDKDYETV, and AGRE…SYTF. The TonB C-terminal box motif lies at 597–614; that stretch reads YGYQTAGREYTLXGSYTF.

It belongs to the TonB-dependent receptor family. BtuB (TC 1.B.14.3.1) subfamily.

It is found in the cell outer membrane. Involved in the active translocation of vitamin B12 (cyanocobalamin) across the outer membrane to the periplasmic space. It derives its energy for transport by interacting with the trans-periplasmic membrane protein TonB. This is Vitamin B12 transporter BtuB from Escherichia coli O6:H1 (strain CFT073 / ATCC 700928 / UPEC).